A 312-amino-acid polypeptide reads, in one-letter code: tRNA uridine(34) hydroxylase (312 aa).

A Rhodanese domain is found at 130–225 (RGDEVVFFDG…YGEQFGNKGL (96 aa)). The active-site Cysteine persulfide intermediate is the Cys185.

Belongs to the TrhO family.

It carries out the reaction uridine(34) in tRNA + AH2 + O2 = 5-hydroxyuridine(34) in tRNA + A + H2O. Catalyzes oxygen-dependent 5-hydroxyuridine (ho5U) modification at position 34 in tRNAs. In Corynebacterium glutamicum (strain R), this protein is tRNA uridine(34) hydroxylase.